The following is a 437-amino-acid chain: Serine hydroxymethyltransferase 2 (437 aa).

(6S)-5,6,7,8-tetrahydrofolate-binding positions include leucine 125 and 129 to 131; that span reads GHL. Lysine 234 carries the post-translational modification N6-(pyridoxal phosphate)lysine.

Belongs to the SHMT family. As to quaternary structure, homodimer. Pyridoxal 5'-phosphate serves as cofactor.

The protein resides in the cytoplasm. The catalysed reaction is (6R)-5,10-methylene-5,6,7,8-tetrahydrofolate + glycine + H2O = (6S)-5,6,7,8-tetrahydrofolate + L-serine. Its pathway is one-carbon metabolism; tetrahydrofolate interconversion. The protein operates within amino-acid biosynthesis; glycine biosynthesis; glycine from L-serine: step 1/1. Catalyzes the reversible interconversion of serine and glycine with tetrahydrofolate (THF) serving as the one-carbon carrier. This reaction serves as the major source of one-carbon groups required for the biosynthesis of purines, thymidylate, methionine, and other important biomolecules. Also exhibits THF-independent aldolase activity toward beta-hydroxyamino acids, producing glycine and aldehydes, via a retro-aldol mechanism. This chain is Serine hydroxymethyltransferase 2, found in Mesorhizobium japonicum (strain LMG 29417 / CECT 9101 / MAFF 303099) (Mesorhizobium loti (strain MAFF 303099)).